The following is a 217-amino-acid chain: Probable cytidylate kinase (217 aa).

An ATP-binding site is contributed by 9 to 17; that stretch reads GPAGSGKST.

It belongs to the cytidylate kinase family. Type 1 subfamily.

It carries out the reaction CMP + ATP = CDP + ADP. The enzyme catalyses dCMP + ATP = dCDP + ADP. The protein is Probable cytidylate kinase of Vairimorpha ceranae (strain BRL01) (Microsporidian parasite).